Here is a 544-residue protein sequence, read N- to C-terminus: U1 small nuclear ribonucleoprotein component PRP42 (544 aa).

HAT repeat units lie at residues 7–39 (LIHDENFSTLTLNVSRYPKSLAYWEKLLNYIVK), 51–83 (QLLKLIRCTYSSMLNEFPYLENYYIDFALLEYK), 85–118 (GNVSMSHKIFQRGLQAFNQRSLLLWTSYLKFCNN), 121–156 (SHQKQLFKKYETAEEYVGLHFFSGEFWDLYLEQISS), and 163–195 (KYWNVLRKILEIPLHSFSKFYALWLQRIDDIMD). The Nuclear localization signal motif lies at 230-235 (KKKLKK). HAT repeat units follow at residues 255–288 (FESKIYINYYTSPETLVSSDEIETWIKYLDYTIT), 290–322 (QTDSLTHLNFQRALLPLAHYDLVWIKYSKWLIN), 366–397 (NLLEKIESSYSDNVENVDDFEIFWDYLQFKTF), and 456–488 (VEKNIFQKIIEFGWEYYLQNGMFWNCYCRLIYF).

As to quaternary structure, component of the 18S U1 snRNP particle, a subcomplex of the spliceosome.

Its subcellular location is the nucleus. Functionally, essential component of the U1 snRNP particle, which recognizes and binds the 5'-splice site of pre-mRNA. Together with other non-snRNP factors, U1 snRNP forms the spliceosomal commitment complex, that targets pre-mRNA to the splicing pathway. U1 snRNP is cotranscriptionally recruited to intron-containing genes. Required for U1 snRNP biogenesis. This Saccharomyces cerevisiae (strain ATCC 204508 / S288c) (Baker's yeast) protein is U1 small nuclear ribonucleoprotein component PRP42 (PRP42).